The primary structure comprises 593 residues: Proteasome-associated ATPase (593 aa).

A coiled-coil region spans residues 5-94 (DDADSRAARW…KEEIDRLAQP (90 aa)). Residue 281 to 286 (GCGKTL) coordinates ATP. Positions 574–593 (GKGADAGRSIETASNTGQYL) are disordered. Positions 584–593 (ETASNTGQYL) are enriched in polar residues. A docks into pockets in the proteasome alpha-ring region spans residues 592-593 (YL).

The protein belongs to the AAA ATPase family. Homohexamer. Assembles into a hexameric ring structure that caps the 20S proteasome core. Strongly interacts with the prokaryotic ubiquitin-like protein Pup through a hydrophobic interface; the interacting region of ARC lies in its N-terminal coiled-coil domain. There is one Pup binding site per ARC hexamer ring. Upon ATP-binding, the C-terminus of ARC interacts with the alpha-rings of the proteasome core, possibly by binding to the intersubunit pockets.

The protein operates within protein degradation; proteasomal Pup-dependent pathway. ATPase which is responsible for recognizing, binding, unfolding and translocation of pupylated proteins into the bacterial 20S proteasome core particle. May be essential for opening the gate of the 20S proteasome via an interaction with its C-terminus, thereby allowing substrate entry and access to the site of proteolysis. Thus, the C-termini of the proteasomal ATPase may function like a 'key in a lock' to induce gate opening and therefore regulate proteolysis. In Salinispora tropica (strain ATCC BAA-916 / DSM 44818 / JCM 13857 / NBRC 105044 / CNB-440), this protein is Proteasome-associated ATPase.